A 422-amino-acid polypeptide reads, in one-letter code: Isocitrate dehydrogenase [NADP] (422 aa).

Residue Thr-94 coordinates NADP(+). Residues Ser-103, Asn-105, Arg-109, Arg-119, and Arg-143 each contribute to the D-threo-isocitrate site. Asp-310 serves as a coordination point for Mg(2+). NADP(+)-binding positions include 344 to 350, Asn-357, Tyr-396, and Arg-400; that span reads HGTAPKY.

The protein belongs to the isocitrate and isopropylmalate dehydrogenases family. Homodimer. Mg(2+) serves as cofactor. It depends on Mn(2+) as a cofactor.

The catalysed reaction is D-threo-isocitrate + NADP(+) = 2-oxoglutarate + CO2 + NADPH. Its function is as follows. Catalyzes the oxidative decarboxylation of isocitrate to 2-oxoglutarate and carbon dioxide with the concomitant reduction of NADP(+). This chain is Isocitrate dehydrogenase [NADP] (icd), found in Staphylococcus epidermidis (strain ATCC 35984 / DSM 28319 / BCRC 17069 / CCUG 31568 / BM 3577 / RP62A).